The primary structure comprises 1342 residues: DNA-directed RNA polymerase subunit beta (1342 aa).

This sequence belongs to the RNA polymerase beta chain family. The RNAP catalytic core consists of 2 alpha, 1 beta, 1 beta' and 1 omega subunit. When a sigma factor is associated with the core the holoenzyme is formed, which can initiate transcription.

The catalysed reaction is RNA(n) + a ribonucleoside 5'-triphosphate = RNA(n+1) + diphosphate. Functionally, DNA-dependent RNA polymerase catalyzes the transcription of DNA into RNA using the four ribonucleoside triphosphates as substrates. This chain is DNA-directed RNA polymerase subunit beta, found in Buchnera aphidicola subsp. Acyrthosiphon pisum (strain 5A).